The sequence spans 396 residues: Glideosome-associated protein 50 (396 aa).

Residues 1-369 lie on the Lumenal side of the membrane; it reads MNYCKTTFHI…PMGNKDTFVR (369 aa). The a metal cation site is built by H195 and H256. A helical membrane pass occupies residues 370–390; that stretch reads VVGTIGILIGSVIVFIGASSF. At 391 to 396 the chain is on the cytoplasmic side; it reads LSKNMK.

This sequence belongs to the metallophosphoesterase superfamily. Purple acid phosphatase family. In terms of assembly, component of the glideosome complex composed of GAP50, GAP45, MTIP and MyoA; the complex is formed during the late schizont stage and in merozoites. MyoA, MTIP and GAP45 probably form an initial complex in the cytoplasm which is then recruited to the outer face of the inner membrane complex via the interaction with GAP50. Interacts with GAP45; the interaction is independent of GAP45 phosphorylation status and can also occur independently of the formation of the glideosome complex. Interacts with human factor H isoform CFH (via sushi 6-7 domains) and isoform FHL-1 (via sushi 6-7 domains); the interaction occurs in the vector mosquito midgut at the surface of activated gametocytes; the interaction protects the parasite from alternative complement pathway-mediated elimination. The cofactor is a metal cation. The N-terminus signal is likely to be cleaved.

The protein localises to the inner membrane complex. It localises to the cell membrane. The protein resides in the endoplasmic reticulum membrane. It carries out the reaction a phosphate monoester + H2O = an alcohol + phosphate. Its activity is regulated as follows. Activity is independent of metal ions. Functionally, component of the glideosome complex, an inner membrane complex structure involved in parasite gliding motility and host cell invasion. During the asexual blood stage, may play a role in the assembly and anchoring of the glideosome complex to the inner membrane complex. During the sexual stage in the vector mosquito midgut, protects gametocytes against host alternative complement pathway-mediated elimination by interacting with host complement inhibitor factor H. Has phosphatase activity towards nucleotides such as ATP, vitamins B1 and B6, phosphorylated sugars, glycerol phosphates and inositol triphosphates. However, the phosphatase activity is controversial. The chain is Glideosome-associated protein 50 from Plasmodium falciparum (isolate 3D7).